We begin with the raw amino-acid sequence, 593 residues long: Arylsulfatase D (593 aa).

A signal peptide spans 1-33 (MRSAARRGRAAPAARDSLPVLLFLCLLLKTCEP). Positions 49 and 50 each coordinate Ca(2+). N-linked (GlcNAc...) asparagine glycosylation occurs at N61. Residue C89 coordinates Ca(2+). C89 serves as the catalytic Nucleophile. Residue C89 is modified to 3-oxoalanine (Cys). A glycan (N-linked (GlcNAc...) asparagine) is linked at N128. K148 lines the substrate pocket. The active site involves H150. H304 serves as a coordination point for substrate. N-linked (GlcNAc...) asparagine glycosylation occurs at N347. Ca(2+)-binding residues include D356 and H357. Residue K381 coordinates substrate.

It belongs to the sulfatase family. Ca(2+) is required as a cofactor. Post-translationally, the conversion to 3-oxoalanine (also known as C-formylglycine, FGly), of a serine or cysteine residue in prokaryotes and of a cysteine residue in eukaryotes, is critical for catalytic activity. In terms of tissue distribution, expressed in the pancreas, kidney, liver, lung, placenta, brain and heart.

Its subcellular location is the lysosome. The sequence is that of Arylsulfatase D (ARSD) from Homo sapiens (Human).